Consider the following 437-residue polypeptide: Enolase (437 aa).

Substrate-binding residues include His-160 and Glu-169. The active-site Proton donor is the Glu-212. Positions 247, 296, and 321 each coordinate Mg(2+). Residues Glu-296 and Asp-321 each contribute to the substrate site. The Proton acceptor role is filled by Lys-346. Residues 373 to 376 (SHRS) and Lys-397 contribute to the substrate site.

Belongs to the enolase family. In terms of assembly, homodimer. Mg(2+) serves as cofactor.

The protein localises to the cytoplasm. The enzyme catalyses (2R)-2-phosphoglycerate = phosphoenolpyruvate + H2O. It functions in the pathway carbohydrate degradation; glycolysis; pyruvate from D-glyceraldehyde 3-phosphate: step 4/5. The sequence is that of Enolase (ENO) from Eremothecium gossypii (strain ATCC 10895 / CBS 109.51 / FGSC 9923 / NRRL Y-1056) (Yeast).